The chain runs to 130 residues: MARVTVEDCIDKVDNRFDLVLLAAHRARMISSGSQLTVDRDNDKNPVVSLREIADTTISPEDLREELVHSLQKFVEVDEPEPDTVPLIGSAGASVDADDTEVAVERMTEEELLKGLEGLAPPEEQPEEDE.

Disordered stretches follow at residues E79–D98 and E109–E130.

The protein belongs to the RNA polymerase subunit omega family. As to quaternary structure, the RNAP catalytic core consists of 2 alpha, 1 beta, 1 beta' and 1 omega subunit. When a sigma factor is associated with the core the holoenzyme is formed, which can initiate transcription.

The catalysed reaction is RNA(n) + a ribonucleoside 5'-triphosphate = RNA(n+1) + diphosphate. Its function is as follows. Promotes RNA polymerase assembly. Latches the N- and C-terminal regions of the beta' subunit thereby facilitating its interaction with the beta and alpha subunits. The sequence is that of DNA-directed RNA polymerase subunit omega (rpoZ) from Bradyrhizobium diazoefficiens (strain JCM 10833 / BCRC 13528 / IAM 13628 / NBRC 14792 / USDA 110).